Reading from the N-terminus, the 78-residue chain is Small ribosomal subunit protein bS18 (78 aa).

It belongs to the bacterial ribosomal protein bS18 family. In terms of assembly, part of the 30S ribosomal subunit. Forms a tight heterodimer with protein bS6.

Functionally, binds as a heterodimer with protein bS6 to the central domain of the 16S rRNA, where it helps stabilize the platform of the 30S subunit. The polypeptide is Small ribosomal subunit protein bS18 (Pediococcus pentosaceus (strain ATCC 25745 / CCUG 21536 / LMG 10740 / 183-1w)).